We begin with the raw amino-acid sequence, 375 residues long: GDP-mannose-dependent alpha-mannosyltransferase (375 aa).

Belongs to the glycosyltransferase group 1 family. Glycosyltransferase 4 subfamily.

It functions in the pathway phospholipid metabolism; phosphatidylinositol metabolism. Functionally, catalyzes the addition of a mannose residue from GDP-D-mannose to GlcAGroAc2 to generate 1,2-di-O-C16/C18:1-(alpha-D-mannopyranosyl)-(1-4)-(alpha-D-glucopyranosyluronic acid)-(1-3)-glycerol(ManGlcAGroAc2). In Mycolicibacterium smegmatis (strain ATCC 700084 / mc(2)155) (Mycobacterium smegmatis), this protein is GDP-mannose-dependent alpha-mannosyltransferase (mgtA).